We begin with the raw amino-acid sequence, 1404 residues long: ABC transporter G family member 47 (1404 aa).

The 268-residue stretch at Gly156–Glu423 folds into the ABC transporter 1 domain. An ATP-binding site is contributed by Gly189–Thr196. Residues Glu501–Phe714 enclose the ABC transmembrane type-2 1 domain. A run of 7 helical transmembrane segments spans residues Phe519–Phe539, Met565–Phe585, Thr607–Phe627, Phe638–Leu658, Val663–Ile683, Trp692–Asn712, and Val751–Phe771. In terms of domain architecture, ABC transporter 2 spans Ile808 to Glu1059. Gly852–Thr859 is an ATP binding site. An ABC transmembrane type-2 2 domain is found at Thr1132 to Phe1346. 7 consecutive transmembrane segments (helical) span residues Ile1152 to Gly1172, Leu1183 to Val1199, Leu1239 to Tyr1259, Phe1266 to Met1286, Thr1298 to Leu1318, Ile1321 to Leu1341, and Leu1373 to Gly1393.

The protein belongs to the ABC transporter superfamily. ABCG family. PDR (TC 3.A.1.205) subfamily.

It is found in the membrane. Its function is as follows. May be a general defense protein. This is ABC transporter G family member 47 from Oryza sativa subsp. japonica (Rice).